Consider the following 652-residue polypeptide: uncharacterized protein (652 aa).

The span at 1 to 13 (MSVTESKAKTERK) shows a compositional bias: basic and acidic residues. The interval 1–21 (MSVTESKAKTERKSSRKPAKT) is disordered.

The protein belongs to the ParB family.

This is an uncharacterized protein from Escherichia coli (strain K12).